The primary structure comprises 390 residues: GTPase Obg (390 aa).

The region spanning 1-159 is the Obg domain; sequence MKFVDEASIL…RELLLELMLL (159 aa). Residues 127–147 form a disordered region; that stretch reads NTRFKSSVNRTPRQKTNGTPG. The segment covering 129 to 145 has biased composition (polar residues); the sequence is RFKSSVNRTPRQKTNGT. One can recognise an OBG-type G domain in the interval 160–333; the sequence is ADVGMLGMPN…LCWDVMTFII (174 aa). GTP-binding positions include 166–173, 191–195, 213–216, 283–286, and 314–316; these read GMPNAGKS, FTTLV, DIPG, NKID, and SAA. Residues Ser173 and Thr193 each coordinate Mg(2+).

The protein belongs to the TRAFAC class OBG-HflX-like GTPase superfamily. OBG GTPase family. As to quaternary structure, monomer. The cofactor is Mg(2+).

The protein resides in the cytoplasm. Its function is as follows. An essential GTPase which binds GTP, GDP and possibly (p)ppGpp with moderate affinity, with high nucleotide exchange rates and a fairly low GTP hydrolysis rate. Plays a role in control of the cell cycle, stress response, ribosome biogenesis and in those bacteria that undergo differentiation, in morphogenesis control. This is GTPase Obg from Escherichia fergusonii (strain ATCC 35469 / DSM 13698 / CCUG 18766 / IAM 14443 / JCM 21226 / LMG 7866 / NBRC 102419 / NCTC 12128 / CDC 0568-73).